Consider the following 528-residue polypeptide: Ribonuclease Y (528 aa).

Residues 15-35 (SLLVFALICGSIIGYFLYSFF) form a helical membrane-spanning segment. The KH domain occupies 217 to 277 (NISVVNIPNE…IRREIAKKTL (61 aa)). Residues 343–436 (VLKHSLEVAF…VAIADTLSSA (94 aa)) enclose the HD domain.

Belongs to the RNase Y family.

The protein localises to the cell membrane. In terms of biological role, endoribonuclease that initiates mRNA decay. The chain is Ribonuclease Y from Onion yellows phytoplasma (strain OY-M).